The sequence spans 217 residues: ATP-dependent Clp protease proteolytic subunit (217 aa).

Ser-121 serves as the catalytic Nucleophile. Residue His-146 is part of the active site.

It belongs to the peptidase S14 family. In terms of assembly, fourteen ClpP subunits assemble into 2 heptameric rings which stack back to back to give a disk-like structure with a central cavity, resembling the structure of eukaryotic proteasomes.

It localises to the cytoplasm. The catalysed reaction is Hydrolysis of proteins to small peptides in the presence of ATP and magnesium. alpha-casein is the usual test substrate. In the absence of ATP, only oligopeptides shorter than five residues are hydrolyzed (such as succinyl-Leu-Tyr-|-NHMec, and Leu-Tyr-Leu-|-Tyr-Trp, in which cleavage of the -Tyr-|-Leu- and -Tyr-|-Trp bonds also occurs).. Functionally, cleaves peptides in various proteins in a process that requires ATP hydrolysis. Has a chymotrypsin-like activity. Plays a major role in the degradation of misfolded proteins. The sequence is that of ATP-dependent Clp protease proteolytic subunit from Burkholderia lata (strain ATCC 17760 / DSM 23089 / LMG 22485 / NCIMB 9086 / R18194 / 383).